The chain runs to 206 residues: Large ribosomal subunit protein mL40 (206 aa).

The transit peptide at 1–46 (MATAAMLCAARALRPRSWIPGTCQAQVRHTHQRASLLSFWELIPMR) directs the protein to the mitochondrion. The segment at 170 to 190 (PFEKEGPHYTPPVPNYQAPEG) is disordered.

It belongs to the mitochondrion-specific ribosomal protein mL40 family. As to quaternary structure, component of the mitochondrial ribosome large subunit (39S) which comprises a 16S rRNA and about 50 distinct proteins.

The protein localises to the mitochondrion. The polypeptide is Large ribosomal subunit protein mL40 (Mrpl40) (Rattus norvegicus (Rat)).